We begin with the raw amino-acid sequence, 527 residues long: Peptide chain release factor 3 (527 aa).

The region spanning 9–277 (AKRRTFAIIS…AVVDWAPKPL (269 aa)) is the tr-type G domain. GTP-binding positions include 18 to 25 (SHPDAGKT), 86 to 90 (DTPGH), and 140 to 143 (NKLD).

It belongs to the TRAFAC class translation factor GTPase superfamily. Classic translation factor GTPase family. PrfC subfamily.

The protein resides in the cytoplasm. Increases the formation of ribosomal termination complexes and stimulates activities of RF-1 and RF-2. It binds guanine nucleotides and has strong preference for UGA stop codons. It may interact directly with the ribosome. The stimulation of RF-1 and RF-2 is significantly reduced by GTP and GDP, but not by GMP. The chain is Peptide chain release factor 3 from Stutzerimonas stutzeri (strain A1501) (Pseudomonas stutzeri).